Consider the following 64-residue polypeptide: uncharacterized protein (64 aa).

The disordered stretch occupies residues 35–64; the sequence is TIRKPPIEHAAGPLGSTSRAGHRSYGGVAS.

This is an uncharacterized protein from Mycobacterium tuberculosis (strain ATCC 25618 / H37Rv).